The primary structure comprises 72 residues: U-poneritoxin(01)-Om7a (72 aa).

An N-terminal signal peptide occupies residues 1–27 (MKPSGLTFAFLVVFMMAIMYNSVQVTA). The propeptide occupies 28-45 (DADADAEAEALANALAEA).

The protein belongs to the formicidae venom precursor-01 superfamily. In terms of tissue distribution, expressed by the venom gland.

Its subcellular location is the secreted. Functionally, peptide with unknown function that does not resemble any other pilosulin-like peptide and appears to have a coiled coil structure. The protein is U-poneritoxin(01)-Om7a of Odontomachus monticola (Trap-jaw ant).